A 210-amino-acid polypeptide reads, in one-letter code: Superoxide dismutase [Mn], mitochondrial (210 aa).

Residues His29, His77, Asp164, and His168 each contribute to the Mn(2+) site.

Belongs to the iron/manganese superoxide dismutase family. In terms of assembly, homotetramer. The cofactor is Mn(2+).

The protein resides in the mitochondrion matrix. The enzyme catalyses 2 superoxide + 2 H(+) = H2O2 + O2. Destroys superoxide anion radicals which are normally produced within the cells and which are toxic to biological systems. The polypeptide is Superoxide dismutase [Mn], mitochondrial (sodB) (Aspergillus niger).